The chain runs to 294 residues: Syntaxin-19 (294 aa).

The region spanning 209–271 is the t-SNARE coiled-coil homology domain; it reads LSEIEQRHKE…NNTKEKFGLA (63 aa).

This sequence belongs to the syntaxin family. As to quaternary structure, interacts with EGFR.

The protein localises to the cell membrane. It is found in the cytoplasm. Plays a role in endosomal trafficking of the epidermal growth factor receptor (EGFR). The sequence is that of Syntaxin-19 (STX19) from Homo sapiens (Human).